A 422-amino-acid polypeptide reads, in one-letter code: Serine--tRNA ligase (422 aa).

Residue 229–231 (TAE) coordinates L-serine. Residue 260-262 (RKE) coordinates ATP. Residue Glu283 participates in L-serine binding. 347 to 350 (EISS) provides a ligand contact to ATP. Ser383 is a binding site for L-serine.

Belongs to the class-II aminoacyl-tRNA synthetase family. Type-1 seryl-tRNA synthetase subfamily. In terms of assembly, homodimer. The tRNA molecule binds across the dimer.

It is found in the cytoplasm. The enzyme catalyses tRNA(Ser) + L-serine + ATP = L-seryl-tRNA(Ser) + AMP + diphosphate + H(+). The catalysed reaction is tRNA(Sec) + L-serine + ATP = L-seryl-tRNA(Sec) + AMP + diphosphate + H(+). Its pathway is aminoacyl-tRNA biosynthesis; selenocysteinyl-tRNA(Sec) biosynthesis; L-seryl-tRNA(Sec) from L-serine and tRNA(Sec): step 1/1. In terms of biological role, catalyzes the attachment of serine to tRNA(Ser). Is also able to aminoacylate tRNA(Sec) with serine, to form the misacylated tRNA L-seryl-tRNA(Sec), which will be further converted into selenocysteinyl-tRNA(Sec). The sequence is that of Serine--tRNA ligase from Geotalea uraniireducens (strain Rf4) (Geobacter uraniireducens).